Consider the following 343-residue polypeptide: Glutamine synthetase (343 aa).

One can recognise a GS beta-grasp domain in the interval 3–87 (FKAEYIWIDG…CEVLNIDLTP (85 aa)). Positions 92–343 (TRAALAEVAE…CSALEKAGQV (252 aa)) constitute a GS catalytic domain. Residues Glu-113, Glu-115, Glu-174, and Glu-181 each contribute to the Mg(2+) site. An L-glutamate-binding site is contributed by Glu-279.

The protein belongs to the glutamine synthetase family. As to quaternary structure, homooctamer and homotetramer. It depends on Mg(2+) as a cofactor.

It localises to the cytoplasm. The catalysed reaction is L-glutamate + NH4(+) + ATP = L-glutamine + ADP + phosphate + H(+). Its function is as follows. Catalyzes the ATP-dependent biosynthesis of glutamine from glutamate and ammonia. The sequence is that of Glutamine synthetase from Streptomyces viridochromogenes.